The chain runs to 603 residues: Myotubularin (603 aa).

Over residues 1 to 13 (MASASTSKYNSHS) the composition is skewed to polar residues. The segment at 1–25 (MASASTSKYNSHSLENESIKRTSRD) is disordered. Residues Ser13 and Ser18 each carry the phosphoserine modification. Residues 14-25 (LENESIKRTSRD) show a composition bias toward basic and acidic residues. The region spanning 29–97 (RDLTEAVPRL…GVISRIEKMG (69 aa)) is the GRAM domain. The region spanning 163–538 (GWTVYNPVEE…RHLELWVNYY (376 aa)) is the Myotubularin phosphatase domain. Residues Asn288, Asn313, and Ile314 each contribute to the a 1,2-diacyl-sn-glycero-3-phospho-(1D-myo-inositol-3,5-bisphosphate) site. The a 1,2-diacyl-sn-glycero-3-phospho-(1D-myo-inositol-3-phosphate) site is built by Asn288, Asn313, and Ile314. Cys375 functions as the Phosphocysteine intermediate in the catalytic mechanism. Ser376, Asp377, Gly378, Trp379, Asp380, Arg381, Lys417, and Arg421 together coordinate a 1,2-diacyl-sn-glycero-3-phospho-(1D-myo-inositol-3,5-bisphosphate). Ser376, Asp377, Gly378, Trp379, Asp380, and Arg381 together coordinate a 1,2-diacyl-sn-glycero-3-phospho-(1D-myo-inositol-3-phosphate). Arg421 contributes to the a 1,2-diacyl-sn-glycero-3-phospho-(1D-myo-inositol-3-phosphate) binding site. Phosphothreonine is present on Thr495. The tract at residues 579 to 603 (SAKLSDPPTSPSSPSQMMPHVQTHF) is disordered. Ser588 carries the post-translational modification Phosphoserine.

The protein belongs to the protein-tyrosine phosphatase family. Non-receptor class myotubularin subfamily. In terms of assembly, heterodimer with MTMR12. Interacts with KMT2A/MLL1 (via SET domain). Interacts with DES in skeletal muscle but not in cardiac muscle. Interacts with SPEG.

It localises to the cytoplasm. It is found in the cell membrane. The protein resides in the cell projection. Its subcellular location is the filopodium. The protein localises to the ruffle. It localises to the late endosome. It is found in the myofibril. The protein resides in the sarcomere. It carries out the reaction a 1,2-diacyl-sn-glycero-3-phospho-(1D-myo-inositol-3-phosphate) + H2O = a 1,2-diacyl-sn-glycero-3-phospho-(1D-myo-inositol) + phosphate. It catalyses the reaction a 1,2-diacyl-sn-glycero-3-phospho-(1D-myo-inositol-3,5-bisphosphate) + H2O = a 1,2-diacyl-sn-glycero-3-phospho-(1D-myo-inositol-5-phosphate) + phosphate. The enzyme catalyses 1,2-dioctanoyl-sn-glycero-3-phospho-(1-D-myo-inositol-3-phosphate) + H2O = 1,2-dioctanoyl-sn-glycero-3-phospho-(1D-myo-inositol) + phosphate. The catalysed reaction is 1,2-dioctanoyl-sn-glycero-3-phospho-(1D-myo-inositol-3,5-bisphosphate) + H2O = 1,2-dioctanoyl-sn-glycero-3-phospho-(1D-myo-inositol-5-phosphate) + phosphate. It carries out the reaction 1,2-dihexadecanoyl-sn-glycero-3-phospho-(1D-myo-inositol-3,5-phosphate) + H2O = 1,2-dihexadecanoyl-sn-glycero-3-phospho-(1D-myo-inositol-5-phosphate) + phosphate. Allosterically activated by phosphatidylinositol 5-phosphate (PI5P). Its function is as follows. Lipid phosphatase which dephosphorylates phosphatidylinositol 3-monophosphate (PI3P) and phosphatidylinositol 3,5-bisphosphate (PI(3,5)P2). Has also been shown to dephosphorylate phosphotyrosine- and phosphoserine-containing peptides. Negatively regulates EGFR degradation through regulation of EGFR trafficking from the late endosome to the lysosome. Plays a role in vacuolar formation and morphology. Regulates desmin intermediate filament assembly and architecture. Plays a role in mitochondrial morphology and positioning. Required for skeletal muscle maintenance but not for myogenesis. In skeletal muscles, stabilizes MTMR12 protein levels. In Pongo abelii (Sumatran orangutan), this protein is Myotubularin.